The sequence spans 562 residues: Isochorismate synthase 2, chloroplastic (562 aa).

The transit peptide at 1 to 55 directs the protein to the chloroplast; it reads MASLQCSFHFLGTNPKKYNPSSIFQSYSRTSFTKLSSRVSRQRFLRCTLSMNGCE.

It belongs to the isochorismate synthase family. Requires Mg(2+) as cofactor.

The protein resides in the plastid. The protein localises to the chloroplast. The catalysed reaction is chorismate = isochorismate. It participates in siderophore biosynthesis; salicylate biosynthesis. In terms of biological role, isochorismate synthase involved in the synthesis of salicylic acid (SA) required for both local and systemic acquired resistance (LAR and SAR) while SA synthesized through the phenylalanine ammonium lyase (PAL) pathway seems to potentiate plant cell death. Also involved in phylloquinone (vitamin K1) synthesis. Has no isochorismate pyruvate lyase (IPL) activity. In Arabidopsis thaliana (Mouse-ear cress), this protein is Isochorismate synthase 2, chloroplastic (ICS2).